Consider the following 255-residue polypeptide: Ribonuclease HII (255 aa).

The RNase H type-2 domain maps to R72–R255. Residues D78, E79, and D170 each contribute to the a divalent metal cation site.

The protein belongs to the RNase HII family. Mn(2+) is required as a cofactor. Mg(2+) serves as cofactor.

It localises to the cytoplasm. The catalysed reaction is Endonucleolytic cleavage to 5'-phosphomonoester.. In terms of biological role, endonuclease that specifically degrades the RNA of RNA-DNA hybrids. The chain is Ribonuclease HII (rnhB) from Bacillus subtilis (strain 168).